The following is a 71-amino-acid chain: ATP synthase subunit c 1 (71 aa).

The next 2 helical transmembrane spans lie at 4–24 and 46–66; these read FIGA…VGHV and LFVG…IALL.

Belongs to the ATPase C chain family. As to quaternary structure, F-type ATPases have 2 components, F(1) - the catalytic core - and F(0) - the membrane proton channel. F(1) has five subunits: alpha(3), beta(3), gamma(1), delta(1), epsilon(1). F(0) has four main subunits: a(1), b(1), b'(1) and c(10-14). The alpha and beta chains form an alternating ring which encloses part of the gamma chain. F(1) is attached to F(0) by a central stalk formed by the gamma and epsilon chains, while a peripheral stalk is formed by the delta, b and b' chains.

Its subcellular location is the cell inner membrane. F(1)F(0) ATP synthase produces ATP from ADP in the presence of a proton or sodium gradient. F-type ATPases consist of two structural domains, F(1) containing the extramembraneous catalytic core and F(0) containing the membrane proton channel, linked together by a central stalk and a peripheral stalk. During catalysis, ATP synthesis in the catalytic domain of F(1) is coupled via a rotary mechanism of the central stalk subunits to proton translocation. Functionally, key component of the F(0) channel; it plays a direct role in translocation across the membrane. A homomeric c-ring of between 10-14 subunits forms the central stalk rotor element with the F(1) delta and epsilon subunits. The protein is ATP synthase subunit c 1 of Cereibacter sphaeroides (strain ATCC 17029 / ATH 2.4.9) (Rhodobacter sphaeroides).